A 419-amino-acid chain; its full sequence is Nodulation protein NoeE (419 aa).

Functionally, required for the formation of sulfated nod factor. Proposed to transfer activated sulfate (PAPS) to the fucose of the nod factor. This chain is Nodulation protein NoeE (noeE), found in Sinorhizobium fredii (strain NBRC 101917 / NGR234).